The following is a 649-amino-acid chain: DNA mismatch repair protein MutL (649 aa).

The protein belongs to the DNA mismatch repair MutL/HexB family.

Its function is as follows. This protein is involved in the repair of mismatches in DNA. It is required for dam-dependent methyl-directed DNA mismatch repair. May act as a 'molecular matchmaker', a protein that promotes the formation of a stable complex between two or more DNA-binding proteins in an ATP-dependent manner without itself being part of a final effector complex. The chain is DNA mismatch repair protein MutL from Streptococcus pneumoniae serotype 19F (strain G54).